The sequence spans 254 residues: U3 small nucleolar RNA-associated protein NOL7 (254 aa).

A disordered region spans residues 1–90; sequence MVQLRPRLSR…ASARRDKTLL (90 aa). Acidic residues-rich tracts occupy residues 18–31 and 48–61; these read MVDE…EEEA and PLDE…EAPE. The segment covering 71-90 has biased composition (basic and acidic residues); that stretch reads EAREEELRVRASARRDKTLL. Residue lysine 127 forms a Glycyl lysine isopeptide (Lys-Gly) (interchain with G-Cter in SUMO2) linkage. Phosphoserine is present on serine 129. Residue lysine 157 forms a Glycyl lysine isopeptide (Lys-Gly) (interchain with G-Cter in SUMO2) linkage. The tract at residues 235 to 254 is disordered; the sequence is NAKRFKKRWMAKKMKKKTYK.

The protein belongs to the UTP16 family. In terms of assembly, part of the small subunit (SSU) processome, composed of more than 70 proteins and the RNA chaperone small nucleolar RNA (snoRNA) U3.

Its subcellular location is the nucleus. The protein localises to the nucleolus. Functions as part of the small subunit (SSU) processome, first precursor of the small eukaryotic ribosomal subunit that coordinates the first two steps of ribosome biogenesis in transcription of the primary transcript pre-RNA and pre-18S processing. During the assembly of the SSU processome in the nucleolus, many ribosome biogenesis factors, an RNA chaperone and ribosomal proteins associate with the nascent pre-rRNA and work in concert to generate RNA folding, modifications, rearrangements and cleavage as well as targeted degradation of pre-ribosomal RNA by the RNA exosome. This subunit is required for processing of the 5'-external transcribed spacer sequence (5'ETS) of the primary transcript pre-rRNA to yield the 18S rRNA. Also plays a role in maintaining early pre-rRNA levels, either by assisting in its transcription or stability. The chain is U3 small nucleolar RNA-associated protein NOL7 (Nol7) from Mus musculus (Mouse).